A 628-amino-acid chain; its full sequence is DNA-directed RNA polymerase subunit beta' (628 aa).

Cys-70, Cys-72, Cys-85, and Cys-88 together coordinate Zn(2+). Residues Asp-472, Asp-474, and Asp-476 each contribute to the Mg(2+) site.

It belongs to the RNA polymerase beta' chain family. RpoC1 subfamily. In terms of assembly, in plastids the minimal PEP RNA polymerase catalytic core is composed of four subunits: alpha, beta, beta', and beta''. When a (nuclear-encoded) sigma factor is associated with the core the holoenzyme is formed, which can initiate transcription. The cofactor is Mg(2+). Zn(2+) is required as a cofactor.

It is found in the plastid. Its subcellular location is the chloroplast. The enzyme catalyses RNA(n) + a ribonucleoside 5'-triphosphate = RNA(n+1) + diphosphate. Functionally, DNA-dependent RNA polymerase catalyzes the transcription of DNA into RNA using the four ribonucleoside triphosphates as substrates. The sequence is that of DNA-directed RNA polymerase subunit beta' from Gracilaria tenuistipitata var. liui (Red alga).